The following is a 170-amino-acid chain: MDVTIQHPWFKRALGPFYPSRLFDQFFGEGLFEYDLLPFLSSTISPYYRQSLFRTALDSGISEVRSDRDRFVILLDVKHFSPEDLTVKVLDDFVEIHGKHNERQDDHGYISREFHRRYRLPTAVDQSALSCSLSADGMLTFSGPKLVDPSHGERTIPVSREEKPSSAPSS.

Met1 is subject to N-acetylmethionine. Positions 1–63 (MDVTIQHPWF…RTALDSGISE (63 aa)) are required for complex formation with BFSP1 and BFSP2. Gln6 is subject to Deamidated glutamine; partial. Ser45 is subject to Phosphoserine. Residue Gln50 is modified to Deamidated glutamine; partial. Positions 52–161 (LFRTALDSGI…GERTIPVSRE (110 aa)) constitute a sHSP domain. The residue at position 99 (Lys99) is an N6-acetyllysine. His100 contributes to the Zn(2+) binding site. The residue at position 101 (Asn101) is a Deamidated asparagine; partial. The Zn(2+) site is built by Glu102, His107, and His151. Positions 144 to 170 (PKLVDPSHGERTIPVSREEKPSSAPSS) are disordered. Over residues 148 to 164 (DPSHGERTIPVSREEKP) the composition is skewed to basic and acidic residues. Ser159 is a glycosylation site (O-linked (GlcNAc) serine).

The protein belongs to the small heat shock protein (HSP20) family. As to quaternary structure, heteromer composed of three CRYAA and one CRYAB subunits. Inter-subunit bridging via zinc ions enhances stability, which is crucial as there is no protein turn over in the lens. Can also form homodimers and homotetramers (dimers of dimers) which serve as the building blocks of homooligomers. Within homooligomers, the zinc-binding motif is created from residues of 3 different molecules. His-100 and Glu-102 from one molecule are ligands of the zinc ion, and His-107 and His-151 residues from additional molecules complete the site with tetrahedral coordination geometry. Part of a complex required for lens intermediate filament formation composed of BFSP1, BFSP2 and CRYAA. Acetylation at Lys-99 may increase chaperone activity. Post-translationally, undergoes age-dependent proteolytical cleavage at the C-terminus.

It localises to the cytoplasm. The protein resides in the nucleus. Functionally, contributes to the transparency and refractive index of the lens. Acts as a chaperone, preventing aggregation of various proteins under a wide range of stress conditions. Required for the correct formation of lens intermediate filaments as part of a complex composed of BFSP1, BFSP2 and CRYAA. This chain is Alpha-crystallin A chain (CRYAA), found in Tamandua mexicana (Northern Tamandua).